A 1503-amino-acid polypeptide reads, in one-letter code: Lysophospholipase NTE1 (1503 aa).

Over 1 to 25 (MDSSTAALATASAKLDAVAQQGSSS) the chain is Cytoplasmic. A helical membrane pass occupies residues 26 to 46 (WIGFFANIILGIISLVYSILY). The Lumenal portion of the chain corresponds to 47 to 71 (SVLKLTTFSIPSLLYTLFSTSLTVT). The chain crosses the membrane as a helical span at residues 72–92 (MNATTLMLIIVLVFSLVSWFV). The Cytoplasmic portion of the chain corresponds to 93 to 1503 (RYRYLNMYSR…RTMAPRRASI (1411 aa)). Disordered stretches follow at residues 252 to 348 (RHGG…TTSV), 454 to 561 (TKGI…SNPF), and 722 to 745 (KNES…RFMD). Polar residues-rich tracts occupy residues 262–272 (TSATETYTSSR), 285–302 (STVS…SSHG), 487–496 (QRPSSVTASP), 506–542 (KHTS…STLL), 552–561 (PLSQRTSNPF), and 723–737 (NESS…QQGS). Residues 658–777 (GLPV…GYVG) and 821–941 (RLTN…IASR) contribute to the a nucleoside 3',5'-cyclic phosphate site. Residues 1200–1364 (LVLGGGGARG…IDNLTVSHMK (165 aa)) enclose the PNPLA domain. A GXGXXG motif is present at residues 1204-1209 (GGGARG). The short motif at 1231 to 1235 (GTSIG) is the GXSXG element. Ser-1233 functions as the Nucleophile in the catalytic mechanism. Asp-1351 acts as the Proton acceptor in catalysis. The DGA/G signature appears at 1351-1353 (DGG).

Belongs to the NTE family.

The protein localises to the endoplasmic reticulum membrane. It catalyses the reaction a 1-acyl-sn-glycero-3-phosphocholine + H2O = sn-glycerol 3-phosphocholine + a fatty acid + H(+). Its activity is regulated as follows. Inhibited by organophosphorus esters. Functionally, intracellular phospholipase B that catalyzes the double deacylation of phosphatidylcholine (PC) to glycerophosphocholine (GroPCho). Plays an important role in membrane lipid homeostasis. Responsible for the rapid PC turnover in response to inositol, elevated temperatures, or when choline is present in the growth medium. The sequence is that of Lysophospholipase NTE1 (NTE1) from Pyricularia oryzae (strain 70-15 / ATCC MYA-4617 / FGSC 8958) (Rice blast fungus).